The following is a 337-amino-acid chain: tRNA N6-adenosine threonylcarbamoyltransferase (337 aa).

Fe cation is bound by residues histidine 111 and histidine 115. Substrate is bound by residues 134–138 (LVSGG), aspartate 167, glycine 180, and asparagine 272. Fe cation is bound at residue aspartate 300.

The protein belongs to the KAE1 / TsaD family. Requires Fe(2+) as cofactor.

It localises to the cytoplasm. The enzyme catalyses L-threonylcarbamoyladenylate + adenosine(37) in tRNA = N(6)-L-threonylcarbamoyladenosine(37) in tRNA + AMP + H(+). In terms of biological role, required for the formation of a threonylcarbamoyl group on adenosine at position 37 (t(6)A37) in tRNAs that read codons beginning with adenine. Is involved in the transfer of the threonylcarbamoyl moiety of threonylcarbamoyl-AMP (TC-AMP) to the N6 group of A37, together with TsaE and TsaB. TsaD likely plays a direct catalytic role in this reaction. The sequence is that of tRNA N6-adenosine threonylcarbamoyltransferase from Shewanella sediminis (strain HAW-EB3).